Here is a 418-residue protein sequence, read N- to C-terminus: Glutamyl-tRNA(Gln) amidotransferase subunit D (418 aa).

The Asparaginase/glutaminase domain maps to 74–405 (KNISILSTGG…EEAKELMPKN (332 aa)). Residues Thr-84, Thr-160, Asp-161, and Lys-237 contribute to the active site.

The protein belongs to the asparaginase 1 family. GatD subfamily. In terms of assembly, heterodimer of GatD and GatE.

It catalyses the reaction L-glutamyl-tRNA(Gln) + L-glutamine + ATP + H2O = L-glutaminyl-tRNA(Gln) + L-glutamate + ADP + phosphate + H(+). Its function is as follows. Allows the formation of correctly charged Gln-tRNA(Gln) through the transamidation of misacylated Glu-tRNA(Gln) in organisms which lack glutaminyl-tRNA synthetase. The reaction takes place in the presence of glutamine and ATP through an activated gamma-phospho-Glu-tRNA(Gln). The GatDE system is specific for glutamate and does not act on aspartate. The protein is Glutamyl-tRNA(Gln) amidotransferase subunit D of Methanococcus maripaludis (strain C6 / ATCC BAA-1332).